Here is a 201-residue protein sequence, read N- to C-terminus: FMN-dependent NADH:quinone oxidoreductase (201 aa).

FMN contacts are provided by residues serine 10, 16 to 18, 96 to 99, and 140 to 143; these read SQS, MYNF, and SRGG.

The protein belongs to the azoreductase type 1 family. As to quaternary structure, homodimer. FMN is required as a cofactor.

It catalyses the reaction 2 a quinone + NADH + H(+) = 2 a 1,4-benzosemiquinone + NAD(+). The catalysed reaction is N,N-dimethyl-1,4-phenylenediamine + anthranilate + 2 NAD(+) = 2-(4-dimethylaminophenyl)diazenylbenzoate + 2 NADH + 2 H(+). In terms of biological role, quinone reductase that provides resistance to thiol-specific stress caused by electrophilic quinones. Its function is as follows. Also exhibits azoreductase activity. Catalyzes the reductive cleavage of the azo bond in aromatic azo compounds to the corresponding amines. This is FMN-dependent NADH:quinone oxidoreductase from Salmonella choleraesuis (strain SC-B67).